Consider the following 172-residue polypeptide: Shikimate kinase (172 aa).

Residue G14 to T19 coordinates ATP. Residue S18 coordinates Mg(2+). Positions 36, 60, and 82 each coordinate substrate. R120 lines the ATP pocket. R140 provides a ligand contact to substrate. Q157 serves as a coordination point for ATP.

It belongs to the shikimate kinase family. Monomer. The cofactor is Mg(2+).

It localises to the cytoplasm. The enzyme catalyses shikimate + ATP = 3-phosphoshikimate + ADP + H(+). It functions in the pathway metabolic intermediate biosynthesis; chorismate biosynthesis; chorismate from D-erythrose 4-phosphate and phosphoenolpyruvate: step 5/7. Functionally, catalyzes the specific phosphorylation of the 3-hydroxyl group of shikimic acid using ATP as a cosubstrate. This Aeromonas salmonicida (strain A449) protein is Shikimate kinase.